A 289-amino-acid polypeptide reads, in one-letter code: MEFVQNWDGYAVRDWMIRNVDVVGYISGIYLAFVFTGPKLFAKITGRDGATSVAPARQGGAGGGGSKAVRRAMVLWNLSLSVFSIFGTSTVTPTLVRNIMNKGFYEATCTFNDKEFYTTDVGFWIGVFALSKIPELMDTIFLVLQGKSTLPFLHWYHHVTVLLFSWHTYCVGSSGYIWVAAMNYSVHSIMYLYFAIAEMGYKHVVRPWAPYITILQILQMVMGCFVTLYAMQESHDGRGCGMTWSNMRIQLLMYASYLYLFSEMFVKAHVLPRWAPVATHANGSLKKSS.

Transmembrane regions (helical) follow at residues 22 to 42 (VVGY…KLFA), 72 to 92 (AMVL…STVT), 123 to 143 (FWIG…IFLV), 152 to 172 (FLHW…YCVG), 177 to 197 (IWVA…FAIA), 208 to 228 (WAPY…FVTL), and 251 to 271 (LLMY…AHVL). Positions 154–158 (HWYHH) match the HxxHH motif motif. Catalysis depends on histidine 157, which acts as the Nucleophile. A glycan (N-linked (GlcNAc...) asparagine) is linked at asparagine 282.

Belongs to the ELO family.

Its subcellular location is the endoplasmic reticulum membrane. The catalysed reaction is an acyl-CoA + malonyl-CoA + H(+) = a 3-oxoacyl-CoA + CO2 + CoA. Its pathway is lipid metabolism; fatty acid biosynthesis. Its function is as follows. Involved in the synthesis of fatty acids. Elongates C4 fatty acids. Required for the normal mitochondrial function, energy metabolism and growth of epimastigotes. In Trypanosoma cruzi (strain CL Brener), this protein is Fatty acid elongase 1.